The chain runs to 511 residues: 2-isopropylmalate synthase (511 aa).

One can recognise a Pyruvate carboxyltransferase domain in the interval 6–269; it reads IIIFDTTLRD…YTDIKCENIS (264 aa). Residues Asp-15, His-203, His-205, and Asn-239 each coordinate Mn(2+). The segment at 394 to 511 is regulatory domain; the sequence is VLEKLSVISG…SLKVEERKMA (118 aa).

Belongs to the alpha-IPM synthase/homocitrate synthase family. LeuA type 1 subfamily. In terms of assembly, homodimer. Requires Mn(2+) as cofactor.

The protein localises to the cytoplasm. The enzyme catalyses 3-methyl-2-oxobutanoate + acetyl-CoA + H2O = (2S)-2-isopropylmalate + CoA + H(+). The protein operates within amino-acid biosynthesis; L-leucine biosynthesis; L-leucine from 3-methyl-2-oxobutanoate: step 1/4. Catalyzes the condensation of the acetyl group of acetyl-CoA with 3-methyl-2-oxobutanoate (2-ketoisovalerate) to form 3-carboxy-3-hydroxy-4-methylpentanoate (2-isopropylmalate). The polypeptide is 2-isopropylmalate synthase (Campylobacter jejuni subsp. doylei (strain ATCC BAA-1458 / RM4099 / 269.97)).